A 657-amino-acid chain; its full sequence is Tyramine beta-hydroxylase (657 aa).

A helical membrane pass occupies residues 77 to 97 (VALLFLLVAYCGGVVHAGEIV). A DOMON domain is found at 103 to 214 (TNVTVKWHTD…GTTQFYIAAS (112 aa)). Asn104 and Asn143 each carry an N-linked (GlcNAc...) asparagine glycan. Tyr278 is a catalytic residue. Cystine bridges form between Cys280–Cys330 and Cys319–Cys342. Positions 312 and 313 each coordinate Cu(2+). 4 residues coordinate Cu(2+): His380, His458, His460, and Met533. 3 cysteine pairs are disulfide-bonded: Cys437–Cys549, Cys441–Cys606, and Cys512–Cys534. His458 is an active-site residue. A glycan (N-linked (GlcNAc...) asparagine) is linked at Asn555.

The protein belongs to the copper type II ascorbate-dependent monooxygenase family. The cofactor is Cu(2+). In terms of tissue distribution, present in synaptic regions of RIC interneurons. Present in gonadal sheath cells of hermaphrodites (at protein level).

The protein resides in the membrane. It catalyses the reaction tyramine + L-ascorbate + O2 = (R)-octopamine + L-dehydroascorbate + H2O. Its function is as follows. Required for the conversion of tyramine to octopamine, a precursor of octapamine but probably itself a neurotransmitter. Involved in the regulation of egg laying, which is inhibited by tyramine. Due to its involvement in octopamine biosynthesis, also required for crtc-1-dependent regulation of AMPK-mediated longevity. This chain is Tyramine beta-hydroxylase, found in Caenorhabditis elegans.